A 124-amino-acid chain; its full sequence is Urease subunit beta (124 aa).

This sequence belongs to the urease beta subunit family. Heterotrimer of UreA (gamma), UreB (beta) and UreC (alpha) subunits. Three heterotrimers associate to form the active enzyme.

It localises to the cytoplasm. The enzyme catalyses urea + 2 H2O + H(+) = hydrogencarbonate + 2 NH4(+). It functions in the pathway nitrogen metabolism; urea degradation; CO(2) and NH(3) from urea (urease route): step 1/1. The chain is Urease subunit beta from Ureaplasma urealyticum serovar 10 (strain ATCC 33699 / Western).